We begin with the raw amino-acid sequence, 77 residues long: Large ribosomal subunit protein uL29 (77 aa).

This sequence belongs to the universal ribosomal protein uL29 family.

The protein is Large ribosomal subunit protein uL29 of Mycolicibacterium smegmatis (strain ATCC 700084 / mc(2)155) (Mycobacterium smegmatis).